The sequence spans 485 residues: E3 ubiquitin-protein ligase RNF14 (485 aa).

Residues 11-137 (DELLALASIY…QFLKEETLTY (127 aa)) enclose the RWD domain. The D-box motif lies at 37–45 (RIYLDLPQN). The segment at 217–458 (KLFLCSICFC…DSESPCFNRL (242 aa)) is TRIAD supradomain. Zn(2+)-binding residues include cysteine 221, cysteine 224, cysteine 239, histidine 241, cysteine 244, cysteine 247, cysteine 266, cysteine 271, cysteine 310, cysteine 315, cysteine 330, cysteine 333, cysteine 338, cysteine 341, and histidine 346. The segment at 221–271 (CSICFCEKLGSDCMYFLECKHVYCKACLKDYFEIQIKDGQVKCLNCPEPQC) adopts an RING-type 1 zinc-finger fold. An IBR-type zinc finger spans residues 290 to 351 (ARYDRLLLQS…RLTYHGLSPC (62 aa)). Serine 349 carries the post-translational modification Phosphoserine. Positions 351, 405, and 408 each coordinate Zn(2+). The RING-type 2; atypical zinc finger occupies 405–434 (CPCCGTPIQKLDGCNKMTCTGCMQYFCWIC). Cysteine 418 is an active-site residue. Zn(2+) is bound by residues cysteine 423, cysteine 426, cysteine 431, cysteine 434, histidine 446, and cysteine 454.

The protein belongs to the RBR family. RNF14 subfamily. Interacts with GCN1; interaction takes place in response to ribosome collisions and is required for ubiquitination of EEF1A1/eEF1A. Interacts with the ubiquitin-conjugating enzymes UBE2E1 and UBE2E2. Interacts with AR/androgen receptor. Interacts with TCF7/TCF1, TCF7L1/TCF3 and TCF7L2/TCF4; promoting Wnt signaling. RING-type zinc finger-dependent and UBE2E2-dependent autoubiquitination.

It is found in the cytoplasm. The protein localises to the nucleus. It catalyses the reaction [E2 ubiquitin-conjugating enzyme]-S-ubiquitinyl-L-cysteine + [acceptor protein]-L-lysine = [E2 ubiquitin-conjugating enzyme]-L-cysteine + [acceptor protein]-N(6)-ubiquitinyl-L-lysine.. Its pathway is protein modification; protein ubiquitination. Its function is as follows. E3 ubiquitin-protein ligase that plays a key role in the RNF14-RNF25 translation quality control pathway, a pathway that takes place when a ribosome has stalled during translation, and which promotes ubiquitination and degradation of translation factors on stalled ribosomes. Recruited to stalled ribosomes by the ribosome collision sensor GCN1 and mediates 'Lys-6'-linked ubiquitination of target proteins, leading to their degradation. Mediates ubiquitination of EEF1A1/eEF1A and ETF1/eRF1 translation factors on stalled ribosomes, leading to their degradation. Also catalyzes ubiquitination of ribosomal proteins RPL0, RPL1, RPL12, RPS13 and RPS17. Specifically required to resolve RNA-protein cross-links caused by reactive aldehydes, which trigger translation stress by stalling ribosomes: acts by catalying 'Lys-6'-linked ubiquitination of RNA-protein cross-links, leading to their removal by the ATP-dependent unfoldase VCP and subsequent degradation by the proteasome. Independently of its function in the response to stalled ribosomes, acts as a regulator of transcription in Wnt signaling via its interaction with TCF transcription factors (TCF7/TCF1, TCF7L1/TCF3 and TCF7L2/TCF4). May also play a role as a coactivator for androgen- and, to a lesser extent, progesterone-dependent transcription. The protein is E3 ubiquitin-protein ligase RNF14 of Mus musculus (Mouse).